Consider the following 64-residue polypeptide: Large ribosomal subunit protein bL35 (64 aa).

Over residues 38–53 (KRKANLNAPKHVHHTN) the composition is skewed to basic residues. The tract at residues 38–64 (KRKANLNAPKHVHHTNAHSVMSLLCRA) is disordered.

Belongs to the bacterial ribosomal protein bL35 family.

The protein is Large ribosomal subunit protein bL35 of Helicobacter pylori (strain G27).